The sequence spans 551 residues: Calcium-dependent protein kinase 13 (551 aa).

The N-myristoyl glycine moiety is linked to residue glycine 2. The interval 15–78 (SFKQTASQRH…APADLGSVLG (64 aa)) is disordered. The 259-residue stretch at 88–346 (YAMGRKLGQG…AHEVLCHPWI (259 aa)) folds into the Protein kinase domain. Residues 94–102 (LGQGQFGTT) and lysine 117 contribute to the ATP site. The active-site Proton acceptor is aspartate 212. The tract at residues 352–382 (APDRPLDPAVLSRIKQFSAMNKLKKMALRVI) is autoinhibitory domain. EF-hand domains lie at 389–424 (EEIA…YGST), 425–460 (LKDT…LNKL), 461–496 (EREE…HNMP), and 497–530 (DAFL…GNMG). Aspartate 402, aspartate 404, serine 406, glutamate 413, aspartate 438, aspartate 440, serine 442, threonine 444, glutamate 449, aspartate 474, aspartate 476, serine 478, tyrosine 480, glutamate 485, aspartate 508, aspartate 510, aspartate 512, arginine 514, and glutamate 519 together coordinate Ca(2+).

Belongs to the protein kinase superfamily. Ser/Thr protein kinase family. CDPK subfamily. In terms of tissue distribution, expressed in vascular tissues of crowns and roots, vascular bundles and central cylinder. Expressed in roots, leaf blades, spikelets and developing seeds.

Its subcellular location is the membrane. The catalysed reaction is L-seryl-[protein] + ATP = O-phospho-L-seryl-[protein] + ADP + H(+). It carries out the reaction L-threonyl-[protein] + ATP = O-phospho-L-threonyl-[protein] + ADP + H(+). With respect to regulation, activated by calcium. Autophosphorylation may play an important role in the regulation of the kinase activity. May play a role in signal transduction pathways that involve calcium as a second messenger. May function in signal transduction pathways that positively regulate responses to cold, salt and drought stresses. This chain is Calcium-dependent protein kinase 13, found in Oryza sativa subsp. japonica (Rice).